The following is a 187-amino-acid chain: Ubiquinol-cytochrome c reductase iron-sulfur subunit (187 aa).

The helical transmembrane segment at 15-35 threads the bilayer; it reads LYYATAGAGAVATGAAVWPLI. The Rieske domain occupies 89 to 185; the sequence is QLGQLVDTNA…AKFIDETTIQ (97 aa). [2Fe-2S] cluster-binding residues include Cys-129, His-131, Cys-149, and His-152. Residues Cys-134 and Cys-151 are joined by a disulfide bond.

This sequence belongs to the Rieske iron-sulfur protein family. In terms of assembly, the main subunits of complex b-c1 are: cytochrome b, cytochrome c1 and the Rieske protein. The cofactor is [2Fe-2S] cluster.

It is found in the cell membrane. The enzyme catalyses a quinol + 2 Fe(III)-[cytochrome c](out) = a quinone + 2 Fe(II)-[cytochrome c](out) + 2 H(+)(out). Functionally, component of the ubiquinol-cytochrome c reductase complex (complex III or cytochrome b-c1 complex), which is a respiratory chain that generates an electrochemical potential coupled to ATP synthesis. In Cereibacter sphaeroides (Rhodobacter sphaeroides), this protein is Ubiquinol-cytochrome c reductase iron-sulfur subunit (petA).